The chain runs to 210 residues: Large ribosomal subunit protein uL4 (210 aa).

The disordered stretch occupies residues 49-76; sequence HCTKTRSEVSGGGKKPWRQKHTGRARHG. Residues 63-76 show a composition bias toward basic residues; that stretch reads KPWRQKHTGRARHG.

This sequence belongs to the universal ribosomal protein uL4 family. In terms of assembly, part of the 50S ribosomal subunit.

In terms of biological role, one of the primary rRNA binding proteins, this protein initially binds near the 5'-end of the 23S rRNA. It is important during the early stages of 50S assembly. It makes multiple contacts with different domains of the 23S rRNA in the assembled 50S subunit and ribosome. Its function is as follows. Forms part of the polypeptide exit tunnel. This chain is Large ribosomal subunit protein uL4, found in Thermodesulfovibrio yellowstonii (strain ATCC 51303 / DSM 11347 / YP87).